Reading from the N-terminus, the 84-residue chain is Kappa-scoloptoxin(11)-Ssm3a (84 aa).

Residues 1-16 form the signal peptide; sequence MSWMFYSFIVFTLAIK.

This sequence belongs to the scoloptoxin-11 family. In terms of processing, contains 2 disulfide bonds. As to expression, expressed by the venom gland.

It localises to the secreted. Inhibits voltage-gated potassium channel currents in DRG neurons. 200 nM of the toxin inhibits current amplitude by only 25% and even at concentrations up to 5 uM, the toxin does not inhibit all potassium currents. In vivo, insects injected with this toxin showed signs of neurotoxicity including twitching, paralysis, and body contraction. This is Kappa-scoloptoxin(11)-Ssm3a from Scolopendra mutilans (Chinese red-headed centipede).